An 84-amino-acid chain; its full sequence is Small ribosomal subunit protein uS17c (84 aa).

This sequence belongs to the universal ribosomal protein uS17 family. As to quaternary structure, part of the 30S ribosomal subunit.

Its subcellular location is the plastid. It localises to the chloroplast. In terms of biological role, one of the primary rRNA binding proteins, it binds specifically to the 5'-end of 16S ribosomal RNA. The polypeptide is Small ribosomal subunit protein uS17c (rps17) (Phaeodactylum tricornutum (strain CCAP 1055/1)).